A 92-amino-acid polypeptide reads, in one-letter code: Small ribosomal subunit protein uS19 (92 aa).

Belongs to the universal ribosomal protein uS19 family.

In terms of biological role, protein S19 forms a complex with S13 that binds strongly to the 16S ribosomal RNA. The chain is Small ribosomal subunit protein uS19 from Buchnera aphidicola subsp. Schizaphis graminum (strain Sg).